Consider the following 258-residue polypeptide: UPF0246 protein YaaA (258 aa).

It belongs to the UPF0246 family.

The sequence is that of UPF0246 protein YaaA from Shigella flexneri serotype 5b (strain 8401).